Here is a 251-residue protein sequence, read N- to C-terminus: 2,3-bisphosphoglycerate-dependent phosphoglycerate mutase (251 aa).

Substrate-binding positions include 11–18, 24–25, Arg63, 90–93, Lys101, 117–118, and 185–186; these read RHGNSDWN, TG, ERHY, RR, and GN. The active-site Tele-phosphohistidine intermediate is His12. Residue Glu90 is the Proton donor/acceptor of the active site.

It belongs to the phosphoglycerate mutase family. BPG-dependent PGAM subfamily.

The enzyme catalyses (2R)-2-phosphoglycerate = (2R)-3-phosphoglycerate. The protein operates within carbohydrate degradation; glycolysis; pyruvate from D-glyceraldehyde 3-phosphate: step 3/5. Catalyzes the interconversion of 2-phosphoglycerate and 3-phosphoglycerate. This is 2,3-bisphosphoglycerate-dependent phosphoglycerate mutase from Clavibacter sepedonicus (Clavibacter michiganensis subsp. sepedonicus).